A 119-amino-acid chain; its full sequence is Dihydroneopterin aldolase (119 aa).

Substrate is bound by residues glutamate 21, tyrosine 53, and 72 to 73 (IE). Lysine 99 functions as the Proton donor/acceptor in the catalytic mechanism.

The protein belongs to the DHNA family.

It carries out the reaction 7,8-dihydroneopterin = 6-hydroxymethyl-7,8-dihydropterin + glycolaldehyde. It participates in cofactor biosynthesis; tetrahydrofolate biosynthesis; 2-amino-4-hydroxy-6-hydroxymethyl-7,8-dihydropteridine diphosphate from 7,8-dihydroneopterin triphosphate: step 3/4. Catalyzes the conversion of 7,8-dihydroneopterin to 6-hydroxymethyl-7,8-dihydropterin. This Streptococcus pyogenes serotype M3 (strain ATCC BAA-595 / MGAS315) protein is Dihydroneopterin aldolase (folB).